Reading from the N-terminus, the 260-residue chain is MGESALESGPVPGAPAGGPVHAVTVVTLLEKLATMLETLRERQGGLAQRQGGLAGSVRRIQSNLGALSRSHDTTSNTLAQLLAKAERVGSHADAAQERAVRRAAQVQRLEANHGLLVARGKLHVLLFKEEAEIPAKAFQKAPEPLGPVELGPQLPEAEAEESSDEEEPVESRARRLRRTGLEKVQSLRRALSGRKGHAAPTPTPVKPPRLGPGRSAEGQWEAQPALESKLEPEPPQDTEEDPGRPGAAEAAAVLQVESAA.

Residues methionine 1–lysine 84 are interaction with CAVIN1. The tract at residues valine 20 to leucine 78 is leucine-zipper. Phosphoserine is present on residues serine 62 and serine 70. Residue lysine 128 forms a Glycyl lysine isopeptide (Lys-Gly) (interchain with G-Cter in SUMO2) linkage. The interval alanine 135–threonine 201 is interaction with CAV1. Positions lysine 140–alanine 260 are disordered. Residues alanine 157–proline 168 are compositionally biased toward acidic residues. Residues serine 162, serine 163, and serine 171 each carry the phosphoserine modification. Residues threonine 201 to leucine 210 show a composition bias toward pro residues.

The protein belongs to the CAVIN family. As to quaternary structure, component of the CAVIN complex composed of CAVIN1, CAVIN2, CAVIN3 and CAVIN4. Interacts with PRKCD and with phosphatidylserine. Phosphatidylserine may form a bridge between PKC and PKC-binding partners and stabilize the binding. Interacts with PER2. Interacts with CAVIN1 and EPS15L1. Interacts (via leucine-zipper domain) with CAV1 in a cholesterol-sensitive manner. Post-translationally, in vitro, phosphorylated by PRKCD.

The protein localises to the cytoplasm. It localises to the membrane. The protein resides in the caveola. Its subcellular location is the cytosol. Its function is as follows. Regulates the traffic and/or budding of caveolae. Plays a role in caveola formation in a tissue-specific manner. Required for the formation of caveolae in smooth muscle but not in the lung and heart endothelial cells. Regulates the equilibrium between cell surface-associated and cell surface-dissociated caveolae by promoting the rapid release of caveolae from the cell surface. Plays a role in the regulation of the circadian clock. Modulates the period length and phase of circadian gene expression and also regulates expression and interaction of the core clock components PER1/2 and CRY1/2. The sequence is that of Caveolae-associated protein 3 (CAVIN3) from Bos taurus (Bovine).